The chain runs to 1054 residues: DNA-directed RNA polymerase subunit beta' (1054 aa).

Mg(2+) is bound by residues Asp383, Asp385, and Asp387. Positions 752, 826, 833, and 836 each coordinate Zn(2+).

It belongs to the RNA polymerase beta' chain family. In terms of assembly, the RNAP catalytic core consists of 2 alpha, 1 beta, 1 beta' and 1 omega subunit. When a sigma factor is associated with the core the holoenzyme is formed, which can initiate transcription. It depends on Mg(2+) as a cofactor. The cofactor is Zn(2+).

It carries out the reaction RNA(n) + a ribonucleoside 5'-triphosphate = RNA(n+1) + diphosphate. In terms of biological role, DNA-dependent RNA polymerase catalyzes the transcription of DNA into RNA using the four ribonucleoside triphosphates as substrates. The polypeptide is DNA-directed RNA polymerase subunit beta' (Weissella paramesenteroides (Leuconostoc paramesenteroides)).